Here is a 201-residue protein sequence, read N- to C-terminus: Probable GTP-binding protein EngB (201 aa).

The 176-residue stretch at 22–197 (TFPEYAFIGR…LNYIESINKE (176 aa)) folds into the EngB-type G domain. GTP is bound by residues 30–37 (GRSNVGKS), 57–61 (GKTML), 75–78 (DLPG), 142–145 (TKAD), and 175–178 (ITSS). Positions 37 and 59 each coordinate Mg(2+).

Belongs to the TRAFAC class TrmE-Era-EngA-EngB-Septin-like GTPase superfamily. EngB GTPase family. It depends on Mg(2+) as a cofactor.

Functionally, necessary for normal cell division and for the maintenance of normal septation. The sequence is that of Probable GTP-binding protein EngB from Bacteroides fragilis (strain ATCC 25285 / DSM 2151 / CCUG 4856 / JCM 11019 / LMG 10263 / NCTC 9343 / Onslow / VPI 2553 / EN-2).